A 504-amino-acid chain; its full sequence is Malonyl-CoA decarboxylase, mitochondrial (504 aa).

Residues methionine 1–serine 50 constitute a mitochondrion transit peptide. The segment at methionine 51 to phenylalanine 201 is alpha-helical domain. The catalytic domain stretch occupies residues serine 202–leucine 504. Serine 340 acts as the Proton acceptor in catalysis. Histidine 434 acts as the Proton donor in catalysis. The Microbody targeting signal motif lies at serine 502–leucine 504.

It localises to the mitochondrion. The protein localises to the cytoplasm. Its subcellular location is the peroxisome. The enzyme catalyses malonyl-CoA + H(+) = acetyl-CoA + CO2. It functions in the pathway metabolic intermediate biosynthesis; acetyl-CoA biosynthesis; acetyl-CoA from malonyl-CoA: step 1/1. Catalyzes the conversion of malonyl-CoA to acetyl-CoA. In the fatty acid biosynthesis MCD selectively removes malonyl-CoA and thus assures that methyl-malonyl-CoA is the only chain elongating substrate for fatty acid synthase and that fatty acids with multiple methyl side chains are produced. In Anser anser anser (Western greylag goose), this protein is Malonyl-CoA decarboxylase, mitochondrial (MLYCD).